Here is a 245-residue protein sequence, read N- to C-terminus: Probable octanoyltransferase 2 (245 aa).

The region spanning 38 to 227 (MEYKPVLYFQ…SIEKEFDIKE (190 aa)) is the BPL/LPL catalytic domain. Substrate contacts are provided by residues 89 to 96 (RGGYETYH), 157 to 159 (SIG), and 170 to 172 (GMA). Residue C188 is the Acyl-thioester intermediate of the active site.

The protein belongs to the LipB family.

It is found in the cytoplasm. The catalysed reaction is octanoyl-[ACP] + L-lysyl-[protein] = N(6)-octanoyl-L-lysyl-[protein] + holo-[ACP] + H(+). The protein operates within protein modification; protein lipoylation via endogenous pathway; protein N(6)-(lipoyl)lysine from octanoyl-[acyl-carrier-protein]: step 1/2. Catalyzes the transfer of endogenously produced octanoic acid from octanoyl-acyl-carrier-protein onto the lipoyl domains of lipoate-dependent enzymes. Lipoyl-ACP can also act as a substrate although octanoyl-ACP is likely to be the physiological substrate. The sequence is that of Probable octanoyltransferase 2 from Picrophilus torridus (strain ATCC 700027 / DSM 9790 / JCM 10055 / NBRC 100828 / KAW 2/3).